A 603-amino-acid chain; its full sequence is NADH-ubiquinone oxidoreductase chain 5 (603 aa).

A run of 15 helical transmembrane segments spans residues 4-24, 35-55, 84-104, 121-141, 177-197, 213-233, 241-261, 273-293, 301-320, 325-347, 366-386, 413-433, 457-477, 480-500, and 583-603; these read ISTL…TTLL, ITKT…LLFV, FFSL…MEFS, LLLF…LQLF, IGDM…NSWE, LLGL…HPWL, TPVS…FTLI, VQTS…ICAL, IIAL…IGIN, AFTH…GSII, MPIT…MPFL, LIAV…ALLG, LILG…PHTT, MTMP…GFTV, and LMKL…LIAL.

This sequence belongs to the complex I subunit 5 family. Core subunit of respiratory chain NADH dehydrogenase (Complex I) which is composed of 45 different subunits.

Its subcellular location is the mitochondrion inner membrane. It carries out the reaction a ubiquinone + NADH + 5 H(+)(in) = a ubiquinol + NAD(+) + 4 H(+)(out). Its function is as follows. Core subunit of the mitochondrial membrane respiratory chain NADH dehydrogenase (Complex I) which catalyzes electron transfer from NADH through the respiratory chain, using ubiquinone as an electron acceptor. Essential for the catalytic activity and assembly of complex I. This is NADH-ubiquinone oxidoreductase chain 5 (MT-ND5) from Mammuthus primigenius (Siberian woolly mammoth).